We begin with the raw amino-acid sequence, 232 residues long: Thiamine import ATP-binding protein ThiQ (232 aa).

The region spanning 2 to 230 is the ABC transporter domain; the sequence is LKLTDITWLY…KASASALLGI (229 aa). 32-39 contributes to the ATP binding site; it reads GPSGAGKS.

Belongs to the ABC transporter superfamily. Thiamine importer (TC 3.A.1.19.1) family. In terms of assembly, the complex is composed of two ATP-binding proteins (ThiQ), two transmembrane proteins (ThiP) and a solute-binding protein (ThiB).

It is found in the cell inner membrane. The catalysed reaction is thiamine(out) + ATP + H2O = thiamine(in) + ADP + phosphate + H(+). Its function is as follows. Part of the ABC transporter complex ThiBPQ involved in thiamine import. Responsible for energy coupling to the transport system. In Escherichia coli O6:K15:H31 (strain 536 / UPEC), this protein is Thiamine import ATP-binding protein ThiQ.